We begin with the raw amino-acid sequence, 458 residues long: MSITKEFDTITAISTPLGEGAIGIVRLSGTDALAIAQSVFKGKNLEQVASHTINYGHIIDPKTGTIIDEVMVSVMLAPKTFTRENVVEINTHGGIAVTNEILQLLIRQGARMAEPGEFTKRAFLNGRVDLTQAEAVMDIIRAKTDKAMTIAVKQLDGSLSQLINDTRQEILNTLAQVEVNIDYPEYDDVEEMTTALLREKTQEFQSLLENLLRTAKRGKILREGLSTAIIGRPNVGKSSLLNNLLREDKAIVTDIAGTTRDVIEEYVNIKGVPLKLVDTAGIRETDDLVEQIGVERSKKALQEADLVLLVLNASEKLTDQDRALLNLSQDSNRIILLNKTDLEQKIELEQLPDDYIPISVLTNQNINLIEDRINQLFFDNAGLVEQDATYLSNARHISLIEKTVQSLEAVNDGLALGMPVDLLQVDLTRTWEILGEITGDAAPDELITQLFSQFCLGK.

Arg26, Glu88, and Arg127 together coordinate (6S)-5-formyl-5,6,7,8-tetrahydrofolate. In terms of domain architecture, TrmE-type G spans 224–378 (GLSTAIIGRP…IEDRINQLFF (155 aa)). Asn234 is a binding site for K(+). Residues 234–239 (NVGKSS), 253–259 (TDIAGTT), and 278–281 (DTAG) each bind GTP. Ser238 contacts Mg(2+). K(+)-binding residues include Thr253, Ile255, and Thr258. Position 259 (Thr259) interacts with Mg(2+). Lys458 contacts (6S)-5-formyl-5,6,7,8-tetrahydrofolate.

It belongs to the TRAFAC class TrmE-Era-EngA-EngB-Septin-like GTPase superfamily. TrmE GTPase family. In terms of assembly, homodimer. Heterotetramer of two MnmE and two MnmG subunits. It depends on K(+) as a cofactor.

The protein localises to the cytoplasm. In terms of biological role, exhibits a very high intrinsic GTPase hydrolysis rate. Involved in the addition of a carboxymethylaminomethyl (cmnm) group at the wobble position (U34) of certain tRNAs, forming tRNA-cmnm(5)s(2)U34. The chain is tRNA modification GTPase MnmE from Streptococcus pyogenes serotype M3 (strain ATCC BAA-595 / MGAS315).